The sequence spans 332 residues: Ribosomal RNA small subunit methyltransferase H (332 aa).

S-adenosyl-L-methionine contacts are provided by residues 36-38 (GGY), aspartate 54, phenylalanine 81, aspartate 102, and glutamine 109. The interval 284–332 (VTAGQEEVSANPRARSAKLRAAERTAAPATADDGESPGWPSLANVMRGG) is disordered.

It belongs to the methyltransferase superfamily. RsmH family.

It is found in the cytoplasm. The enzyme catalyses cytidine(1402) in 16S rRNA + S-adenosyl-L-methionine = N(4)-methylcytidine(1402) in 16S rRNA + S-adenosyl-L-homocysteine + H(+). Specifically methylates the N4 position of cytidine in position 1402 (C1402) of 16S rRNA. This is Ribosomal RNA small subunit methyltransferase H from Nitrobacter hamburgensis (strain DSM 10229 / NCIMB 13809 / X14).